Reading from the N-terminus, the 247-residue chain is MRILVSNDDGYFAPGIAALAEALQEVGDVTVVAPERDRSAASNSLTLDRPLSLRRAANGFHFVNGTPTDCVHLAVTGMLDHLPDMVVSGVNHGANMGDDTIYSGTVAAATEGFLLGVPAIAVSLVSKAATDFSAAARVARDLAERFTRIPFQHPVLLNVNVPDRPYEELRGLRVTRLGKRHKAEPVIRSVTPRNETVYWVGAAGQAADAGEGTDFQAVAEGFVSVTPLQIDLTHNGLIPSVAEWIGR.

Residues Asp-8, Asp-9, Ser-39, and Asn-91 each contribute to the a divalent metal cation site.

It belongs to the SurE nucleotidase family. A divalent metal cation serves as cofactor.

The protein localises to the cytoplasm. The catalysed reaction is a ribonucleoside 5'-phosphate + H2O = a ribonucleoside + phosphate. Its function is as follows. Nucleotidase that shows phosphatase activity on nucleoside 5'-monophosphates. This Aromatoleum aromaticum (strain DSM 19018 / LMG 30748 / EbN1) (Azoarcus sp. (strain EbN1)) protein is 5'-nucleotidase SurE.